Here is a 364-residue protein sequence, read N- to C-terminus: Chorismate synthase (364 aa).

Arg-47 contacts NADP(+). FMN is bound by residues 125–127 (RAS), Gly-288, 303–307 (KPTAT), and Arg-329.

This sequence belongs to the chorismate synthase family. As to quaternary structure, homotetramer. FMNH2 is required as a cofactor.

It catalyses the reaction 5-O-(1-carboxyvinyl)-3-phosphoshikimate = chorismate + phosphate. Its pathway is metabolic intermediate biosynthesis; chorismate biosynthesis; chorismate from D-erythrose 4-phosphate and phosphoenolpyruvate: step 7/7. In terms of biological role, catalyzes the anti-1,4-elimination of the C-3 phosphate and the C-6 proR hydrogen from 5-enolpyruvylshikimate-3-phosphate (EPSP) to yield chorismate, which is the branch point compound that serves as the starting substrate for the three terminal pathways of aromatic amino acid biosynthesis. This reaction introduces a second double bond into the aromatic ring system. In Synechococcus sp. (strain CC9605), this protein is Chorismate synthase.